The sequence spans 503 residues: uncharacterized protein (503 aa).

This sequence belongs to the Mg-chelatase subunits D/I family. ComM subfamily.

This is an uncharacterized protein from Mycobacterium tuberculosis (strain CDC 1551 / Oshkosh).